The primary structure comprises 478 residues: Probable cytosolic Fe-S cluster assembly factor CPIJ010948 (478 aa).

Residues Cys23, Cys69, Cys72, Cys75, Cys189, Cys245, Cys396, and Cys400 each coordinate [4Fe-4S] cluster.

Belongs to the NARF family.

In terms of biological role, component of the cytosolic iron-sulfur (Fe/S) protein assembly machinery. Required for maturation of extramitochondrial Fe/S proteins. This chain is Probable cytosolic Fe-S cluster assembly factor CPIJ010948, found in Culex quinquefasciatus (Southern house mosquito).